The following is a 383-amino-acid chain: Probable lipid transporter atnI (383 aa).

Helical transmembrane passes span 46–66 (VLFSVLFGLTTIIHIVQAIMF) and 71–91 (AWVVIMSSLWELIAFIMRSLF). N-linked (GlcNAc...) asparagine glycosylation is present at Asn-94. 5 helical membrane-spanning segments follow: residues 104–124 (FTIFFLLAPIWVNAFLYMTLG), 144–164 (FGHIFVWLEILAFIIQLVGAA), 182–202 (IYMGGIGVQELFILIFTGLFI), 231–251 (WLFYAIYASLFLITVRIIFRL), and 269–289 (WFEYVWDAAPIFICLAILNVA). A disordered region spans residues 305 to 383 (VSRKEKKQRK…YDNRGNEVRP (79 aa)). The span at 307–316 (RKEKKQRKRE) shows a compositional bias: basic residues. Over residues 317–329 (KKEAKIAEKEAKK) the composition is skewed to basic and acidic residues.

This sequence belongs to the lipid-translocating exporter (LTE) (TC 9.A.26.1) family.

It is found in the membrane. It participates in secondary metabolite biosynthesis. Functionally, probable lipid transporter; part of the gene cluster that mediates the biosynthesis of aspercryptins, linear lipopeptides built from six amino acids including 2 highly unusual and nonproteogenic amino acids, 2-amino-octanoic acid (2aoa) and 2-amino-dodecanol (2adol). The core structure of aspercryptins is as follows: Ser/Ala-Thr-Ile/Val-2aoa-Asn-2adol. The first step of aspercryptin biosynthesis is the generation of the fatty acid precursors, octanoic and dodecanoic acids, by the FAS subunits atnF and atnM. The fatty acid precursors are likely transformed into the corresponding alpha-amino fatty acids in three steps. First, they are hydroxylated by the cytochrome P450 monooxygenase atnE, then oxidized to the corresponding alpha-keto acids by the NAD(P)-dependent oxidoreductase atnD, and finally converted to the alpha-amino fatty acids by the PLP-dependent aminotransferases atnH or atnJ. the alpha-amino fatty acids, 2-amino-octanoic and 2-amino-dodecanoic acids, are recognized, activated, and covalently tethered to the NRPS atnA by its fourth and sixth adenylation domains. The second module of atnA is the Thr module and contains an epimerase (E) domain responsible for the epimerization of Thr to D-allo-Thr. Additionally, despite atnA having only one epimerase domain, the first amino acid of aspercryptin A1 is D-Ser, suggesting that serine is either loaded directly as D-Ser on the first module or that the epimerase domain in the threonine module epimerizes both L-Ser and L-Thr. After condensation of the hexapeptide of aspercryptin, the C-terminal reductase (TE) domain might be involved in the reductive release and production of the aldehyde hexapeptide. Further reduction would generate aspercryptins. The variety of aspercryptins produced reflects the flexibility of the atnA NRPS, allowing incorporation of alanine instead of serine, valine for isoleucine, and a C10 fatty amino alcohol instead of the C12 version. AtnB seems to be involved in the selectivity for Ile versus Val by the third module. Moreover, type B, C and D aspercryptins have an additional N-terminal cichorine, acetyl and propionyl group respectively. This Emericella nidulans (strain FGSC A4 / ATCC 38163 / CBS 112.46 / NRRL 194 / M139) (Aspergillus nidulans) protein is Probable lipid transporter atnI.